Reading from the N-terminus, the 150-residue chain is Cytochrome c-type biogenesis protein CcmE (150 aa).

Topologically, residues 1–7 (MTRKQKR) are cytoplasmic. A helical; Signal-anchor for type II membrane protein transmembrane segment spans residues 8-28 (LAIIGGGVGFLTAAVLLVMFA). At 29–150 (FSQAVAYFYV…VTLGGEENIR (122 aa)) the chain is on the periplasmic side. Heme-binding residues include His-123 and Tyr-127.

It belongs to the CcmE/CycJ family.

Its subcellular location is the cell inner membrane. In terms of biological role, heme chaperone required for the biogenesis of c-type cytochromes. Transiently binds heme delivered by CcmC and transfers the heme to apo-cytochromes in a process facilitated by CcmF and CcmH. The sequence is that of Cytochrome c-type biogenesis protein CcmE from Sinorhizobium medicae (strain WSM419) (Ensifer medicae).